Consider the following 126-residue polypeptide: L-alanine exporter AlaE (126 aa).

A helical membrane pass occupies residues 23 to 43 (FALVVYCFFTGMAIEILLSGM).

This sequence belongs to the AlaE exporter family.

The protein localises to the cell inner membrane. In terms of biological role, exports L-alanine. The chain is L-alanine exporter AlaE from Sodalis glossinidius (strain morsitans).